A 477-amino-acid chain; its full sequence is Inner membrane protein YbhI (477 aa).

The Cytoplasmic segment spans residues 1-5; sequence MNKKS. Residues 6 to 26 form a helical membrane-spanning segment; it reads LWKLILILAIPCIIGFMPAPA. Position 27 (Gly27) is a topological domain, periplasmic. The helical transmembrane segment at 28 to 48 threads the bilayer; sequence LSELAWVLFGIYLAAIVGLVI. Over 49-50 the chain is Cytoplasmic; sequence KP. Residues 51–71 form a helical membrane-spanning segment; sequence FPEPVVLLIAVAASMVVVGNL. Over 72-87 the chain is Periplasmic; it reads SDGAFKTTAVLSGYSS. The chain crosses the membrane as a helical span at residues 88–108; that stretch reads GTTWLVFSAFTLSAAFVTTGL. Over 109–148 the chain is Cytoplasmic; that stretch reads GKRIAYLLIGKIGNTTLGLGYVTVFLDLVLAPATPSNTAR. Residues 149–169 form a helical membrane-spanning segment; that stretch reads AGGIVLPIINSVAVALGSEPE. Residues 170-219 are Periplasmic-facing; that stretch reads KSPRRVGHYLMMSIYMVTKTTSYMFFTAMAGNILALKMINDILHLQISWG. Residues 220 to 240 form a helical membrane-spanning segment; it reads GWALAAGLPGIIMLLVTPLVI. Topologically, residues 241 to 272 are cytoplasmic; that stretch reads YTMYPPEIKKVDNKTIAKAGLAELGPMKIREK. A helical membrane pass occupies residues 273–293; sequence MLLGVFVLALLGWIFSKSLGV. Residues 294–297 lie on the Periplasmic side of the membrane; the sequence is DEST. A helical transmembrane segment spans residues 298–318; sequence VAIVVMATMLLLGIVTWEDVV. The Cytoplasmic segment spans residues 319–356; sequence KNKGGWNTLIWYGGIIGLSSLLSKVKFFEWLAEVFKNN. The helical transmembrane segment at 357–377 threads the bilayer; sequence LAFDGHGNVAFFVIIFLSIIV. Residue Arg378 is a topological domain, periplasmic. Residues 379–399 traverse the membrane as a helical segment; it reads YFFASGSAYIVAMLPVFAMLA. Topologically, residues 400-445 are cytoplasmic; the sequence is NVSGAPLMLTALALLFSNSYGGMVTHYGGAAGPVIFGVGYNDIKSW. Residues 446-466 form a helical membrane-spanning segment; that stretch reads WLVGAVLTILTFLVHITLGVW. Residues 467–477 lie on the Periplasmic side of the membrane; it reads WWNMLIGWNML.

The protein belongs to the SLC13A/DASS transporter (TC 2.A.47) family. DIT1 subfamily.

It localises to the cell inner membrane. This is Inner membrane protein YbhI (ybhI) from Escherichia coli (strain K12).